We begin with the raw amino-acid sequence, 481 residues long: Solute carrier family 46 member 2 (481 aa).

The Cytoplasmic segment spans residues 1–37 (MGPEAAGPGRGAAPRLQVRTWIEPVVAATQVASSLYE). Residues 38 to 58 (AGLLLVVKASFGAGAGAGAGA) form a helical membrane-spanning segment. The Extracellular segment spans residues 59–83 (ASNHSAGPPRGAPEDQQQRAISNFY). N-linked (GlcNAc...) asparagine glycosylation is present at asparagine 61. The helical transmembrane segment at 84–104 (IVYNLVVGLTPLLSAYALGWL) threads the bilayer. Over 105-113 (SDRRHRKVA) the chain is Cytoplasmic. A helical transmembrane segment spans residues 114–134 (ICVALLGFLLSRVGLLLKVLL). Over 135–143 (DWPVEVLYG) the chain is Extracellular. A helical membrane pass occupies residues 144–164 (AAALNGLCGGFSAFWAGVMAL). The Cytoplasmic portion of the chain corresponds to 165-179 (GSLGSSEGRRSVRLV). A helical transmembrane segment spans residues 180–200 (LIDLILGLAGFCGSMASGHLF). At 201–210 (KQVAGHSGQG) the chain is on the extracellular side. The chain crosses the membrane as a helical span at residues 211-231 (LVLTACSVSCATFALLYSLLV). Over 232-286 (LKVPEAAAGSGQALSAGDSVAGTVGTYRTLDPDHSDKQSVQGLHPPSPGKAKPRR) the chain is Cytoplasmic. Positions 263 to 282 (PDHSDKQSVQGLHPPSPGKA) are disordered. A helical transmembrane segment spans residues 287–307 (TIIALLFLGAIVYDLAVVGTV). Residues 308–326 (DVMPLFVLREPLSWNQVQV) are Extracellular-facing. Residues 327-347 (GYGMAAGYTIFITSFLGVLVF) traverse the membrane as a helical segment. Over 348-353 (SRCFQD) the chain is Cytoplasmic. The chain crosses the membrane as a helical span at residues 354 to 374 (TTMIMIGMVSFGSGALLLAFV). Residues 375 to 376 (KE) lie on the Extracellular side of the membrane. A helical transmembrane segment spans residues 377–397 (TYMFYIARAVMLFALIPITTI). The Cytoplasmic segment spans residues 398–412 (RSAMSKLIKGSSYGK). The helical transmembrane segment at 413-433 (VFVILQLSLTLTGVVTSTVYN) threads the bilayer. Topologically, residues 434–446 (KIYQVTMEKFIGT) are extracellular. A helical transmembrane segment spans residues 447-467 (CFALSSFLSFLAIIPIGIVAY). Over 468–481 (KQASWLQYGDVRET) the chain is Cytoplasmic.

Belongs to the major facilitator superfamily. SLC46A family. In terms of processing, glycosylated. As to expression, highly expressed by the epididymal duct epithelium.

It is found in the endosome membrane. The protein resides in the cell membrane. The catalysed reaction is N-acetyl-beta-D-glucosaminyl-(1-&gt;4)-1,6-anhydro-N-acetyl-beta-D-muramoyl-L-alanyl-gamma-D-glutamyl-meso-2,6-diaminopimeloyl-D-alanine(out) + n H(+)(out) = N-acetyl-beta-D-glucosaminyl-(1-&gt;4)-1,6-anhydro-N-acetyl-beta-D-muramoyl-L-alanyl-gamma-D-glutamyl-meso-2,6-diaminopimeloyl-D-alanine(in) + n H(+)(in). It catalyses the reaction L-alanyl-gamma-D-glutamyl-meso-2,6-diaminopimelate(out) + n H(+)(out) = L-alanyl-gamma-D-glutamyl-meso-2,6-diaminopimelate(in) + n H(+)(in). The enzyme catalyses N-acetyl-D-muramoyl-L-alanyl-D-isoglutamine(out) + n H(+)(out) = N-acetyl-D-muramoyl-L-alanyl-D-isoglutamine(in) + n H(+)(in). It carries out the reaction 2',3'-cGAMP(out) + n H(+)(out) = 2',3'-cGAMP(in) + n H(+)(in). The catalysed reaction is 3',3'-cGAMP(out) + n H(+)(out) = 3',3'-cGAMP(in) + n H(+)(in). Functionally, proton-coupled transporter that delivers pathogen-associated or danger-associated molecular patterns to cytosolic pattern recognition receptors as part of the innate immune response to microbes or tissue injury. Has selectivity toward muropeptides that contain the amino acid diaminopimelic acid (DAP-type peptidoglycan muropeptides) including Tri-DAP and tracheal toxin (TCT), common in Gram-negative bacteria and Gram-positive bacilli. In the context of immune recognition of skin microbiota, shuttles bacterial muropeptides across the endolysosomal membranes into the cytosol for recognition by NOD1, triggering MYD88-dependent secretion of IL1A and neutrophil recruitment in a pyroptosis-type inflammatory process. To a lesser extent and redundantly, transports muramyl dipeptides derived from most bacterial proteoglycans, eliciting NOD2 receptor activation and downstream inflammatory responses. Postulated to function as an importer of cyclic GMP-AMP dinucleotides (cGAMPs) in monocyte and macrophage cell lineages. Selectively imports cGAMPs derived from pathogenic bacteria such as 3'3'-cGAMP thus providing for differential immune recognition of pathogenic versus commensal bacteria. During tumorigenesis may transport extracellular tumor-derived 2'3'-cGAMP across the plasma membrane of M1-polarized macrophages to activate the anti-tumoral stimulator of interferon genes (STING) pathway. The transport mechanism, its electrogenicity and stoichiometry remain to be elucidated. This chain is Solute carrier family 46 member 2, found in Canis lupus familiaris (Dog).